Reading from the N-terminus, the 218-residue chain is Fucoxanthin-chlorophyll a-c binding protein, chloroplastic (218 aa).

Residues 1 to 36 (MFYSAAVAALMVGSASAFLAPAQFNSVAKSSGALSM) constitute a chloroplast transit peptide.

The protein belongs to the fucoxanthin chlorophyll protein family. In terms of assembly, the LHC complex of chromophytic algae is composed of fucoxanthin, chlorophyll A and C bound non-covalently by fucoxanthin chlorophyll proteins (FCPs). The ratio of pigments in this LHC is; fucoxanthin: chlorophyll C: chlorophyll A; (0.6-1): (0.1-0.3): (1).

It localises to the plastid. Its subcellular location is the chloroplast thylakoid membrane. Its function is as follows. The light-harvesting complex (LHC) functions as a light receptor, it captures and delivers excitation energy to photosystems with which it is closely associated. Energy is transferred from the carotenoid and chlorophyll C (or B) to chlorophyll A and the photosynthetic reaction centers where it is used to synthesize ATP and reducing power. The polypeptide is Fucoxanthin-chlorophyll a-c binding protein, chloroplastic (Chattonella marina var. antiqua (Red tide flagellate)).